The chain runs to 100 residues: Large ribosomal subunit protein uL23 (100 aa).

The protein belongs to the universal ribosomal protein uL23 family. Part of the 50S ribosomal subunit. Contacts protein L29, and trigger factor when it is bound to the ribosome.

One of the early assembly proteins it binds 23S rRNA. One of the proteins that surrounds the polypeptide exit tunnel on the outside of the ribosome. Forms the main docking site for trigger factor binding to the ribosome. In Photobacterium profundum (strain SS9), this protein is Large ribosomal subunit protein uL23.